Consider the following 289-residue polypeptide: 4-diphosphocytidyl-2-C-methyl-D-erythritol kinase (289 aa).

Lys-10 is a catalytic residue. 94–104 contacts ATP; the sequence is PVAAGLAGGSS. The active site involves Asp-136.

It belongs to the GHMP kinase family. IspE subfamily.

The catalysed reaction is 4-CDP-2-C-methyl-D-erythritol + ATP = 4-CDP-2-C-methyl-D-erythritol 2-phosphate + ADP + H(+). Its pathway is isoprenoid biosynthesis; isopentenyl diphosphate biosynthesis via DXP pathway; isopentenyl diphosphate from 1-deoxy-D-xylulose 5-phosphate: step 3/6. Its function is as follows. Catalyzes the phosphorylation of the position 2 hydroxy group of 4-diphosphocytidyl-2C-methyl-D-erythritol. The sequence is that of 4-diphosphocytidyl-2-C-methyl-D-erythritol kinase from Bacillus velezensis (strain DSM 23117 / BGSC 10A6 / LMG 26770 / FZB42) (Bacillus amyloliquefaciens subsp. plantarum).